Here is a 1193-residue protein sequence, read N- to C-terminus: Chloride channel protein 2 (1193 aa).

Over 1–168 (MVYFGDRQRD…WIWRHTVARL (168 aa)) the chain is Cytoplasmic. The disordered stretch occupies residues 76–97 (SHAFYPCPPPAENARDSDSSDD). Helical transmembrane passes span 169-204 (GEDWVFLALLGIIMALLSFIMDKGISICTNARIWLY) and 213-236 (VQYIAWVSLPVCLILFSAGFVHLI). The short motif at 242–246 (GSGIP) is the Selectivity filter part_1 element. Residue Ser243 coordinates chloride. Residues 245–252 (IPEMKTIL) constitute an intramembrane region (helical). Transmembrane regions (helical) follow at residues 261–279 (LTFKTLVAKVIGLTATLGS) and 286–304 (EGPFVHIASIVAQLLSKLV). Residues 284–288 (GKEGP) carry the Selectivity filter part_2 motif. 2 intramembrane regions (helical) span residues 320–332 (MLAAACAVGVGAC) and 336–344 (PVGGVLFSI). Transmembrane regions (helical) follow at residues 356-373 (YWRGFFAAVCGATVFRLL), 402-430 (LFVFALIGLVCGLGGASYVWVHRRYVLFM), 439-458 (FLQKNRFLYPGFLALLVSSI), 511-530 (FGNLVIYTLFTFVVSIIAST), and 536-555 (GMFIPVFKIGAGFGRLVGEF). Positions 536 to 540 (GMFIP) match the Selectivity filter part_3 motif. Chloride is bound at residue Phe538. Residues 576 to 590 (GGYAVVGAAAFSGSV) constitute an intramembrane region (helical). The segment at residues 591-592 (TH) is an intramembrane region (note=Loop between two helices). Residues 593 to 604 (TVSVAVIIFEMT) constitute an intramembrane region (helical). An intramembrane region (note=Loop between two helices) is located at residues 605–609 (GQITH). A helical membrane pass occupies residues 610 to 626 (VVPVMIAVLVANAVAAL). The Cytoplasmic portion of the chain corresponds to 627–1193 (LQPSIYDSII…KSNTENGNHA (567 aa)). Tyr632 is a chloride binding site. Positions 663 to 723 (MVRDVKYIWH…KMIEKHIGRE (61 aa)) constitute a CBS 1 domain. 3 disordered regions span residues 848–884 (TLQDVQPDPETGSLSPAASNHEVEVPRTPSTPGVSKK), 1103–1122 (NSFVPPTRDEDADEKPAVEK), and 1159–1193 (IKHTDKGTVSLTMPPQESKQSPSADKSNTENGNHA). Residues 1048–1105 (IDPSPFQLVERTSILKVHSLFSMVGINHAYVTKIGRLVGVVGLKELRKAIEDINSNSF) form the CBS 2 domain. The span at 1165 to 1193 (GTVSLTMPPQESKQSPSADKSNTENGNHA) shows a compositional bias: polar residues.

The protein belongs to the chloride channel (TC 2.A.49) family. At embryonic stages 13-16, expressed in a subset of the midline cells of the midline primordium and in all of the midline glia. Expressed along the Z-line of the sarcomere in larval longitudinal muscles.

It is found in the membrane. Its function is as follows. Voltage-gated chloride channel. Chloride channels have several functions including the regulation of cell volume; membrane potential stabilization, signal transduction and transepithelial transport. The protein is Chloride channel protein 2 (ClC-a) of Drosophila melanogaster (Fruit fly).